The sequence spans 307 residues: Aspartate carbamoyltransferase catalytic subunit (307 aa).

Positions 58 and 59 each coordinate carbamoyl phosphate. Residue Lys-86 coordinates L-aspartate. Residues Arg-108, His-138, and Gln-141 each coordinate carbamoyl phosphate. L-aspartate-binding residues include Arg-171 and Arg-223. Carbamoyl phosphate-binding residues include Ala-264 and Pro-265.

It belongs to the aspartate/ornithine carbamoyltransferase superfamily. ATCase family. In terms of assembly, heterododecamer (2C3:3R2) of six catalytic PyrB chains organized as two trimers (C3), and six regulatory PyrI chains organized as three dimers (R2).

The catalysed reaction is carbamoyl phosphate + L-aspartate = N-carbamoyl-L-aspartate + phosphate + H(+). It participates in pyrimidine metabolism; UMP biosynthesis via de novo pathway; (S)-dihydroorotate from bicarbonate: step 2/3. In terms of biological role, catalyzes the condensation of carbamoyl phosphate and aspartate to form carbamoyl aspartate and inorganic phosphate, the committed step in the de novo pyrimidine nucleotide biosynthesis pathway. This chain is Aspartate carbamoyltransferase catalytic subunit, found in Streptococcus suis (strain 98HAH33).